A 141-amino-acid polypeptide reads, in one-letter code: Nucleoside diphosphate kinase (141 aa).

Lysine 11, phenylalanine 59, arginine 87, threonine 93, arginine 104, and asparagine 114 together coordinate ATP. The active-site Pros-phosphohistidine intermediate is the histidine 117.

This sequence belongs to the NDK family. In terms of assembly, homotetramer. Mg(2+) serves as cofactor.

Its subcellular location is the cytoplasm. The enzyme catalyses a 2'-deoxyribonucleoside 5'-diphosphate + ATP = a 2'-deoxyribonucleoside 5'-triphosphate + ADP. The catalysed reaction is a ribonucleoside 5'-diphosphate + ATP = a ribonucleoside 5'-triphosphate + ADP. Major role in the synthesis of nucleoside triphosphates other than ATP. The ATP gamma phosphate is transferred to the NDP beta phosphate via a ping-pong mechanism, using a phosphorylated active-site intermediate. In Pseudomonas putida (strain W619), this protein is Nucleoside diphosphate kinase.